The chain runs to 178 residues: Dual-action ribosomal maturation protein DarP (178 aa).

Polar residues predominate over residues 1–14 (MTVSDHPQTVSQPD). A disordered region spans residues 1 to 25 (MTVSDHPQTVSQPDPESESRPSKTR).

The protein belongs to the DarP family.

The protein resides in the cytoplasm. In terms of biological role, member of a network of 50S ribosomal subunit biogenesis factors which assembles along the 30S-50S interface, preventing incorrect 23S rRNA structures from forming. Promotes peptidyl transferase center (PTC) maturation. The sequence is that of Dual-action ribosomal maturation protein DarP from Nitrosomonas europaea (strain ATCC 19718 / CIP 103999 / KCTC 2705 / NBRC 14298).